An 80-amino-acid chain; its full sequence is MSCCGGNCGCGAGCKCVGCGGCKMYPDLSFSGETTTSEALVLGVAPSMNSQYEASGETFVAENDACKCGSDCKCNPCTCK.

It belongs to the metallothionein superfamily. Type 15 family.

Its function is as follows. Metallothioneins have a high content of cysteine residues that bind various heavy metals. The chain is Metallothionein-like protein type 2, MT2-22 from Brassica juncea (Indian mustard).